We begin with the raw amino-acid sequence, 619 residues long: Alpha-L-arabinofuranosidase C (619 aa).

An N-terminal signal peptide occupies residues 1-37 (MINHNKTPNILAKVFKRTCGLVSTGAALAILSQAASA). Residues 38–136 (ACTYTIDSEW…TVTGAACNSA (99 aa)) enclose the CBM2 domain. Residues Cys-39 and Cys-133 are joined by a disulfide bond. Residues 163–289 (LLQEAQAGFC…LPNIDSLSVV (127 aa)) form the CBM6 domain. Residues 300-319 (SVSSSSSVQSSSSSSSTPSQ) are disordered.

Belongs to the glycosyl hydrolase 62 family.

It localises to the secreted. It catalyses the reaction Hydrolysis of terminal non-reducing alpha-L-arabinofuranoside residues in alpha-L-arabinosides.. It participates in glycan metabolism; hemicellulose degradation. In terms of biological role, xylanase C contributes to hydrolyze hemicellulose, the major component of plant cell-walls. The protein is Alpha-L-arabinofuranosidase C (xynC) of Cellvibrio japonicus (strain Ueda107) (Pseudomonas fluorescens subsp. cellulosa).